A 461-amino-acid chain; its full sequence is Phosphomethylpyrimidine synthase (461 aa).

Substrate is bound by residues N80, M109, Y138, H173, 193 to 195, 234 to 237, and E273; these read SRG and DGLR. H277 provides a ligand contact to Zn(2+). Y300 contributes to the substrate binding site. H341 provides a ligand contact to Zn(2+). [4Fe-4S] cluster is bound by residues C421, C424, and C429.

It belongs to the ThiC family. It depends on [4Fe-4S] cluster as a cofactor.

It carries out the reaction 5-amino-1-(5-phospho-beta-D-ribosyl)imidazole + S-adenosyl-L-methionine = 4-amino-2-methyl-5-(phosphooxymethyl)pyrimidine + CO + 5'-deoxyadenosine + formate + L-methionine + 3 H(+). It functions in the pathway cofactor biosynthesis; thiamine diphosphate biosynthesis. Catalyzes the synthesis of the hydroxymethylpyrimidine phosphate (HMP-P) moiety of thiamine from aminoimidazole ribotide (AIR) in a radical S-adenosyl-L-methionine (SAM)-dependent reaction. This chain is Phosphomethylpyrimidine synthase, found in Solibacter usitatus (strain Ellin6076).